A 126-amino-acid polypeptide reads, in one-letter code: MPKEIILPEGTPPPLAPYVPATKADNIVYVSGILPLDENNDVVHVGDAAAQTRHVLETIKHILSNAGGSLKDVTFNHIFLRDWADYPAINQVYAEYFPEERPARYCVQVGLVKPDALIEIASVAHV.

Belongs to the RutC family.

It carries out the reaction (Z)-3-aminoacrylate + H2O + H(+) = 3-oxopropanoate + NH4(+). Its function is as follows. Involved in pyrimidine catabolism. Catalyzes the deamination of 3-aminoacrylate to malonic semialdehyde, a reaction that can also occur spontaneously. RutC may facilitate the reaction and modulate the metabolic fitness, rather than catalyzing essential functions. This Acinetobacter baylyi (strain ATCC 33305 / BD413 / ADP1) protein is 3-aminoacrylate deaminase RutC.